Consider the following 266-residue polypeptide: Uridylate kinase (266 aa).

Position 26-29 (26-29 (KLGG)) interacts with ATP. G67 is a binding site for UMP. Residues G68 and R72 each contribute to the ATP site. UMP contacts are provided by residues D87 and 148 to 155 (LGAPYFST). ATP is bound by residues Y181 and D184.

This sequence belongs to the UMP kinase family. Homohexamer.

It is found in the cytoplasm. The catalysed reaction is UMP + ATP = UDP + ADP. The protein operates within pyrimidine metabolism; CTP biosynthesis via de novo pathway; UDP from UMP (UMPK route): step 1/1. Inhibited by UTP. Catalyzes the reversible phosphorylation of UMP to UDP. The polypeptide is Uridylate kinase (Acidothermus cellulolyticus (strain ATCC 43068 / DSM 8971 / 11B)).